A 106-amino-acid polypeptide reads, in one-letter code: uORF protein (106 aa).

Residues 1-19 (MDLETRVSGHEKPQRRNPE) show a composition bias toward basic and acidic residues. Residues 1 to 31 (MDLETRVSGHEKPQRRNPEDPDCQYAKTRSS) are disordered.

Its subcellular location is the host cytoplasm. The protein localises to the host cytoskeleton. In terms of biological role, plays a role in viral replication. The sequence is that of uORF protein from Zika virus (ZIKV).